The chain runs to 293 residues: ATP phosphoribosyltransferase (293 aa).

This sequence belongs to the ATP phosphoribosyltransferase family. Long subfamily. Requires Mg(2+) as cofactor.

It localises to the cytoplasm. The catalysed reaction is 1-(5-phospho-beta-D-ribosyl)-ATP + diphosphate = 5-phospho-alpha-D-ribose 1-diphosphate + ATP. Its pathway is amino-acid biosynthesis; L-histidine biosynthesis; L-histidine from 5-phospho-alpha-D-ribose 1-diphosphate: step 1/9. Feedback inhibited by histidine. Functionally, catalyzes the condensation of ATP and 5-phosphoribose 1-diphosphate to form N'-(5'-phosphoribosyl)-ATP (PR-ATP). Has a crucial role in the pathway because the rate of histidine biosynthesis seems to be controlled primarily by regulation of HisG enzymatic activity. The sequence is that of ATP phosphoribosyltransferase from Nitratidesulfovibrio vulgaris (strain DP4) (Desulfovibrio vulgaris).